The chain runs to 242 residues: MNPDEFVTTLNNQSLPISNRKMVLFQTYLEFLLEYSKKVNLTAIKEPKDIWLKHFYDSLTPLLYLPDMNKKASLIDIGSGAGFPGVPLKIVNQKFQLTLLDSLQKRIAFLDQLIDKLNLKNVETVHGRAEDFAHNLNYREKYDFAIARAVSNTNTLLELLLPFVKVGGKIILMKTVHVESEIYGASKALEELGGRVSQSFSFELPNDDPRVLITIDKISSTKKRYPRKAGVPEKSPIGGKHD.

S-adenosyl-L-methionine contacts are provided by residues Gly-78, Phe-83, 129-130, and Arg-148; that span reads AE. The segment at 221–242 is disordered; sequence TKKRYPRKAGVPEKSPIGGKHD.

Belongs to the methyltransferase superfamily. RNA methyltransferase RsmG family.

Its subcellular location is the cytoplasm. In terms of biological role, specifically methylates the N7 position of a guanine in 16S rRNA. The polypeptide is Ribosomal RNA small subunit methyltransferase G (Oenococcus oeni (strain ATCC BAA-331 / PSU-1)).